The chain runs to 433 residues: MHSLVKPVLFFVVVRIVQYAIISLSPNKQFDLSTNLLLAKYCSEQETQQFWHRHLFNKLLSWDSVFFIKTAMTMDGYPEYEHEWAFSVIWSSLIRSVSPSNNFYTVLKTAVILENLIYFMAMITLFYLTRITFGKLDKSKTHLSDKLATFTAILFSCNSGSGFFTGPYSEPLSFLFSFLGILAREFSVTPIIPYGLEFKSSKIFYYTIVSSFCFTIATLNRSNCILLGFYYVFDSIYLIRRQKYKKALLFPVLAGCIVALFFVRQQFYIPYKNFCELRGEWCNESLINFKPLHFLTRKSLYSYIQSEHWNLGLFNYWTPNNIPNFLFGLPTFVILFSSTFYFSRVYPNYKLKPLIFITRAFTIIILLFAHVQIINRISTFIPLHLWYISDRFVKFEANKKMTGDDWIVKGYIYWLIFWVPIQTSLFVFFLPPA.

9 helical membrane-spanning segments follow: residues 4-24, 109-129, 148-165, 172-194, 204-226, 247-267, 322-342, 354-374, and 410-430; these read LVKP…IISL, TAVI…FYLT, ATFT…GFFT, LSFL…IIPY, FYYT…NCIL, ALLF…RQQF, IPNF…TFYF, LIFI…VQII, and GYIY…VFFL.

This sequence belongs to the PIGV family.

It localises to the endoplasmic reticulum membrane. The protein operates within glycolipid biosynthesis; glycosylphosphatidylinositol-anchor biosynthesis. Its function is as follows. Mannosyltransferase involved in glycosylphosphatidylinositol-anchor biosynthesis. Transfers the second mannose to the glycosylphosphatidylinositol during GPI precursor assembly. The sequence is that of GPI mannosyltransferase 2 (GPI18) from Candida glabrata (strain ATCC 2001 / BCRC 20586 / JCM 3761 / NBRC 0622 / NRRL Y-65 / CBS 138) (Yeast).